Consider the following 398-residue polypeptide: 1-deoxy-D-xylulose 5-phosphate reductoisomerase (398 aa).

Thr10, Gly11, Ser12, Val13, Gly36, Arg37, Asn38, and Asn124 together coordinate NADPH. Lys125 contributes to the 1-deoxy-D-xylulose 5-phosphate binding site. Glu126 provides a ligand contact to NADPH. Mn(2+) is bound at residue Asp150. The 1-deoxy-D-xylulose 5-phosphate site is built by Ser151, Glu152, Ser186, and His209. Glu152 is a binding site for Mn(2+). NADPH is bound at residue Gly215. 1-deoxy-D-xylulose 5-phosphate-binding residues include Ser222, Asn227, Lys228, and Glu231. Glu231 is a Mn(2+) binding site.

It belongs to the DXR family. Homodimer. Mg(2+) serves as cofactor. Mn(2+) is required as a cofactor.

The enzyme catalyses 2-C-methyl-D-erythritol 4-phosphate + NADP(+) = 1-deoxy-D-xylulose 5-phosphate + NADPH + H(+). It functions in the pathway isoprenoid biosynthesis; isopentenyl diphosphate biosynthesis via DXP pathway; isopentenyl diphosphate from 1-deoxy-D-xylulose 5-phosphate: step 1/6. Its function is as follows. Catalyzes the NADPH-dependent rearrangement and reduction of 1-deoxy-D-xylulose-5-phosphate (DXP) to 2-C-methyl-D-erythritol 4-phosphate (MEP). This chain is 1-deoxy-D-xylulose 5-phosphate reductoisomerase, found in Serratia proteamaculans (strain 568).